Here is a 172-residue protein sequence, read N- to C-terminus: Adenylate kinase isoenzyme 6 (172 aa).

ATP is bound by residues glycine 13, glycine 15, lysine 16, threonine 17, and threonine 18. Residues 33–56 are NMPbind; it reads NVGDLAREGELYDGFDEEYNCPIL. The LID stretch occupies residues 108–118; that stretch reads TRGYSEKKLND. ATP is bound by residues arginine 109 and lysine 148.

The protein belongs to the adenylate kinase family. AK6 subfamily. Monomer and homodimer. Interacts with small ribosomal subunit protein uS11. Not a structural component of 43S pre-ribosomes, but transiently interacts with them by binding to uS11. Interacts with COIL (via C-terminus).

It is found in the cytoplasm. It localises to the nucleus. The protein localises to the nucleoplasm. Its subcellular location is the cajal body. It catalyses the reaction AMP + ATP = 2 ADP. It carries out the reaction ATP + H2O = ADP + phosphate + H(+). In terms of biological role, broad-specificity nucleoside monophosphate (NMP) kinase that catalyzes the reversible transfer of the terminal phosphate group between nucleoside triphosphates and monophosphates. Also has ATPase activity. Involved in the late cytoplasmic maturation steps of the 40S ribosomal particles, specifically 18S rRNA maturation. While NMP activity is not required for ribosome maturation, ATPase activity is. Associates transiently with small ribosomal subunit protein uS11. ATP hydrolysis breaks the interaction with uS11. May temporarily remove uS11 from the ribosome to enable a conformational change of the ribosomal RNA that is needed for the final maturation step of the small ribosomal subunit. Its NMP activity may have a role in nuclear energy homeostasis. May be involved in regulation of Cajal body (CB) formation. The chain is Adenylate kinase isoenzyme 6 from Oryctolagus cuniculus (Rabbit).